The following is a 193-amino-acid chain: Phosphatidylglycerophosphatase and protein-tyrosine phosphatase 1 (193 aa).

The transit peptide at 1 to 31 (MAASAWLEAGLARVLFYPTLLYTVFRGRVRG) directs the protein to the mitochondrion. The Tyrosine-protein phosphatase domain maps to 37–188 (WYHRIDHTVL…LKEFHKEITA (152 aa)). An N6-succinyllysine modification is found at lysine 85. Cysteine 132 serves as the catalytic Phosphocysteine intermediate.

Belongs to the protein-tyrosine phosphatase family. Non-receptor class dual specificity subfamily. Interacts with STYXL1; the interaction inhibits PTPMT1 catalytic activity. As to expression, predominantly expressed in testis. Expressed at lower level in heart, brain, spleen, lung, liver, skeletal muscle, kidney, bone marrow, eye, lymph node, smooth muscle, prostate, thymus, stomach and uterus.

The protein localises to the mitochondrion inner membrane. The enzyme catalyses a 1,2-diacyl-sn-glycero-3-phospho-(1'-sn-glycero-3'-phosphate) + H2O = a 1,2-diacyl-sn-glycero-3-phospho-(1'-sn-glycerol) + phosphate. It carries out the reaction O-phospho-L-tyrosyl-[protein] + H2O = L-tyrosyl-[protein] + phosphate. It catalyses the reaction O-phospho-L-seryl-[protein] + H2O = L-seryl-[protein] + phosphate. The catalysed reaction is O-phospho-L-threonyl-[protein] + H2O = L-threonyl-[protein] + phosphate. The enzyme catalyses 1,2-di-(9Z-octadecenoyl)-sn-glycero-3-phospho-(1'-sn-glycerol-3'-phosphate) + H2O = 1,2-di-(9Z-octadecenoyl)-sn-glycero-3-phospho-(1'-sn-glycerol) + phosphate. It carries out the reaction 1,2-dioctanoyl-sn-glycero-3-phospho-(1D-myo-inositol-5-phosphate) + H2O = 1,2-dioctanoyl-sn-glycero-3-phospho-(1D-myo-inositol) + phosphate. It catalyses the reaction a 1-acyl-2-hexanoyl-sn-glycero-3-phospho-(1D-myo-inositol-5-phosphate) + H2O = a 1-acyl-2-hexanoyl-sn-glycero-3-phospho-(1D-myo-inositol) + phosphate. The catalysed reaction is 1,2-dibutyryl-sn-glycero-3-phospho-(1D-myo-inositol-5-phosphate) + H2O = 1,2-dibutyryl-sn-glycero-3-phospho-(1D-myo-inositol) + phosphate. Its pathway is phospholipid metabolism; phosphatidylglycerol biosynthesis; phosphatidylglycerol from CDP-diacylglycerol: step 2/2. Lipid phosphatase which dephosphorylates phosphatidylglycerophosphate (PGP) to phosphatidylglycerol (PG). PGP is an essential intermediate in the biosynthetic pathway of cardiolipin, a mitochondrial-specific phospholipid regulating the membrane integrity and activities of the organelle. Has also been shown to display phosphatase activity toward phosphoprotein substrates, specifically mediates dephosphorylation of mitochondrial proteins, thereby playing an essential role in ATP production. Has probably a preference for proteins phosphorylated on Ser and/or Thr residues compared to proteins phosphorylated on Tyr residues. Probably involved in regulation of insulin secretion in pancreatic beta cells. May prevent intrinsic apoptosis, probably by regulating mitochondrial membrane integrity. This Mus musculus (Mouse) protein is Phosphatidylglycerophosphatase and protein-tyrosine phosphatase 1.